A 215-amino-acid polypeptide reads, in one-letter code: Uridine kinase (215 aa).

16 to 23 (GASASGKS) is an ATP binding site.

The protein belongs to the uridine kinase family.

The protein localises to the cytoplasm. It carries out the reaction uridine + ATP = UMP + ADP + H(+). The catalysed reaction is cytidine + ATP = CMP + ADP + H(+). It functions in the pathway pyrimidine metabolism; CTP biosynthesis via salvage pathway; CTP from cytidine: step 1/3. Its pathway is pyrimidine metabolism; UMP biosynthesis via salvage pathway; UMP from uridine: step 1/1. The sequence is that of Uridine kinase from Aliivibrio salmonicida (strain LFI1238) (Vibrio salmonicida (strain LFI1238)).